The chain runs to 204 residues: Holliday junction branch migration complex subunit RuvA (204 aa).

The domain I stretch occupies residues Met1–Met64. The interval Thr65–Gly143 is domain II. Residues Leu144 to Gly151 are flexible linker. A domain III region spans residues Val152–Arg204.

This sequence belongs to the RuvA family. In terms of assembly, homotetramer. Forms an RuvA(8)-RuvB(12)-Holliday junction (HJ) complex. HJ DNA is sandwiched between 2 RuvA tetramers; dsDNA enters through RuvA and exits via RuvB. An RuvB hexamer assembles on each DNA strand where it exits the tetramer. Each RuvB hexamer is contacted by two RuvA subunits (via domain III) on 2 adjacent RuvB subunits; this complex drives branch migration. In the full resolvosome a probable DNA-RuvA(4)-RuvB(12)-RuvC(2) complex forms which resolves the HJ.

It is found in the cytoplasm. The RuvA-RuvB-RuvC complex processes Holliday junction (HJ) DNA during genetic recombination and DNA repair, while the RuvA-RuvB complex plays an important role in the rescue of blocked DNA replication forks via replication fork reversal (RFR). RuvA specifically binds to HJ cruciform DNA, conferring on it an open structure. The RuvB hexamer acts as an ATP-dependent pump, pulling dsDNA into and through the RuvAB complex. HJ branch migration allows RuvC to scan DNA until it finds its consensus sequence, where it cleaves and resolves the cruciform DNA. The polypeptide is Holliday junction branch migration complex subunit RuvA (Rhizobium johnstonii (strain DSM 114642 / LMG 32736 / 3841) (Rhizobium leguminosarum bv. viciae)).